The chain runs to 286 residues: Formamidopyrimidine-DNA glycosylase (286 aa).

Proline 2 acts as the Schiff-base intermediate with DNA in catalysis. Glutamate 3 functions as the Proton donor in the catalytic mechanism. Lysine 61 acts as the Proton donor; for beta-elimination activity in catalysis. DNA is bound by residues histidine 103, arginine 122, and arginine 164. Residues 250–284 (NAYAQTGEPCGRCGTLIIRESFMNRGSHYCPNCQK) form an FPG-type zinc finger. Arginine 274 (proton donor; for delta-elimination activity) is an active-site residue.

Belongs to the FPG family. Monomer. Zn(2+) serves as cofactor.

It catalyses the reaction Hydrolysis of DNA containing ring-opened 7-methylguanine residues, releasing 2,6-diamino-4-hydroxy-5-(N-methyl)formamidopyrimidine.. The catalysed reaction is 2'-deoxyribonucleotide-(2'-deoxyribose 5'-phosphate)-2'-deoxyribonucleotide-DNA = a 3'-end 2'-deoxyribonucleotide-(2,3-dehydro-2,3-deoxyribose 5'-phosphate)-DNA + a 5'-end 5'-phospho-2'-deoxyribonucleoside-DNA + H(+). Its function is as follows. Involved in base excision repair of DNA damaged by oxidation or by mutagenic agents. Acts as a DNA glycosylase that recognizes and removes damaged bases. Has a preference for oxidized purines, such as 7,8-dihydro-8-oxoguanine (8-oxoG). Has AP (apurinic/apyrimidinic) lyase activity and introduces nicks in the DNA strand. Cleaves the DNA backbone by beta-delta elimination to generate a single-strand break at the site of the removed base with both 3'- and 5'-phosphates. The sequence is that of Formamidopyrimidine-DNA glycosylase from Corynebacterium glutamicum (strain ATCC 13032 / DSM 20300 / JCM 1318 / BCRC 11384 / CCUG 27702 / LMG 3730 / NBRC 12168 / NCIMB 10025 / NRRL B-2784 / 534).